The primary structure comprises 166 residues: Small ribosomal subunit protein bS18m (166 aa).

The N-terminal 31 residues, 1–31 (MLGRRIFSPAPNRGFILCNLIQSNNSTRRGF), are a transit peptide targeting the mitochondrion. The disordered stretch occupies residues 29 to 48 (RGFSDNRKFNERNSEASSNV). Residues 30–42 (GFSDNRKFNERNS) show a composition bias toward basic and acidic residues.

Belongs to the bacterial ribosomal protein bS18 family. As to quaternary structure, component of the mitochondrial small ribosomal subunit (mt-SSU). Mature yeast 74S mitochondrial ribosomes consist of a small (37S) and a large (54S) subunit. The 37S small subunit contains a 15S ribosomal RNA (15S mt-rRNA) and at least 32 different proteins. The 54S large subunit contains a 21S rRNA (21S mt-rRNA) and at least 45 different proteins.

The protein resides in the mitochondrion. Component of the mitochondrial ribosome (mitoribosome), a dedicated translation machinery responsible for the synthesis of mitochondrial genome-encoded proteins, including at least some of the essential transmembrane subunits of the mitochondrial respiratory chain. The mitoribosomes are attached to the mitochondrial inner membrane and translation products are cotranslationally integrated into the membrane. In Schizosaccharomyces pombe (strain 972 / ATCC 24843) (Fission yeast), this protein is Small ribosomal subunit protein bS18m (rsm18).